The chain runs to 200 residues: NADH-quinone oxidoreductase subunit C (200 aa).

It belongs to the complex I 30 kDa subunit family. NDH-1 is composed of 14 different subunits. Subunits NuoB, C, D, E, F, and G constitute the peripheral sector of the complex.

It is found in the cell inner membrane. It carries out the reaction a quinone + NADH + 5 H(+)(in) = a quinol + NAD(+) + 4 H(+)(out). Functionally, NDH-1 shuttles electrons from NADH, via FMN and iron-sulfur (Fe-S) centers, to quinones in the respiratory chain. The immediate electron acceptor for the enzyme in this species is believed to be ubiquinone. Couples the redox reaction to proton translocation (for every two electrons transferred, four hydrogen ions are translocated across the cytoplasmic membrane), and thus conserves the redox energy in a proton gradient. The sequence is that of NADH-quinone oxidoreductase subunit C from Burkholderia vietnamiensis (strain G4 / LMG 22486) (Burkholderia cepacia (strain R1808)).